We begin with the raw amino-acid sequence, 526 residues long: 2-isopropylmalate synthase (526 aa).

A Pyruvate carboxyltransferase domain is found at 5–267 (VIIFDTTLRD…HTGIRHQEIY (263 aa)). 4 residues coordinate Mn(2+): Asp14, His202, His204, and Asn238. The interval 393-526 (RLEYFSVQSG…VPSISTSSTH (134 aa)) is regulatory domain.

It belongs to the alpha-IPM synthase/homocitrate synthase family. LeuA type 1 subfamily. In terms of assembly, homodimer. It depends on Mn(2+) as a cofactor.

The protein resides in the cytoplasm. It carries out the reaction 3-methyl-2-oxobutanoate + acetyl-CoA + H2O = (2S)-2-isopropylmalate + CoA + H(+). Its pathway is amino-acid biosynthesis; L-leucine biosynthesis; L-leucine from 3-methyl-2-oxobutanoate: step 1/4. Its function is as follows. Catalyzes the condensation of the acetyl group of acetyl-CoA with 3-methyl-2-oxobutanoate (2-ketoisovalerate) to form 3-carboxy-3-hydroxy-4-methylpentanoate (2-isopropylmalate). This chain is 2-isopropylmalate synthase, found in Edwardsiella ictaluri (strain 93-146).